Consider the following 277-residue polypeptide: S-formylglutathione hydrolase FrmB (277 aa).

Catalysis depends on charge relay system residues Ser-145, Asp-221, and His-254.

It belongs to the esterase D family.

It catalyses the reaction S-formylglutathione + H2O = formate + glutathione + H(+). In terms of biological role, serine hydrolase involved in the detoxification of formaldehyde. Hydrolyzes S-formylglutathione to glutathione and formate. The polypeptide is S-formylglutathione hydrolase FrmB (frmB) (Escherichia coli (strain SMS-3-5 / SECEC)).